We begin with the raw amino-acid sequence, 502 residues long: Acetylcholine receptor subunit alpha-type unc-63 (502 aa).

The first 23 residues, 1 to 23, serve as a signal peptide directing secretion; that stretch reads MGPNDHGFAYILIFLLLSPPTHA. The Extracellular segment spans residues 24-263; sequence NRDANRLFED…HLRRKTLFYT (240 aa). Asparagine 136 is a glycosylation site (N-linked (GlcNAc...) asparagine). Cysteine 151 and cysteine 165 are oxidised to a cystine. Transmembrane regions (helical) follow at residues 264 to 284, 293 to 313, and 326 to 346; these read VNLIFPSVGISFLTALVFYLP, LCISILISLTVFFLLLVEIIP, and LLFTMVLVTLSVVVTVVTLNV. At 347-470 the chain is on the cytoplasmic side; that stretch reads HYRSPTTHTM…WKYISVVMDR (124 aa). A helical transmembrane segment spans residues 471 to 491; that stretch reads IFLITFTFACAFGTVVIIARA.

The protein belongs to the ligand-gated ion channel (TC 1.A.9) family. Acetylcholine receptor (TC 1.A.9.1) subfamily. In terms of assembly, component of nicotinic acetylcholine receptor. In muscles, composed of 2 non-alpha subunits lev-1 and unc-29, and 3 alpha subunits unc-38, unc-63 and lev-8. In cholinergic motoneurons, composed of 2 non-alpha subunits acr-2 and acr-3, and 3 alpha subunits unc-38, unc-63 and acr-12. Interacts with lev-10. Expressed in body wall muscles, in vulval muscles and in neurons.

The protein resides in the postsynaptic cell membrane. The protein localises to the cell membrane. Functionally, alpha subunit of nicotinic acetylcholine receptor (nAChR). Probably acts in cholinergic motoneurons to regulate presynaptic neurotransmitter release, thereby ensuring normal level of excitation of cholinergic motoneurons during locomotion. Involved in nAChR sensitivity to nicotine and levamisole. This Caenorhabditis elegans protein is Acetylcholine receptor subunit alpha-type unc-63 (unc-63).